Consider the following 307-residue polypeptide: Ornithine carbamoyltransferase (307 aa).

Carbamoyl phosphate-binding positions include 56-59, glutamine 83, arginine 107, and 134-137; these read STRT and HPCQ. Residues asparagine 165, aspartate 223, and 227–228 contribute to the L-ornithine site; that span reads SM. Carbamoyl phosphate is bound by residues 263-264 and arginine 291; that span reads CL.

Belongs to the aspartate/ornithine carbamoyltransferase superfamily. OTCase family.

The protein resides in the cytoplasm. It catalyses the reaction carbamoyl phosphate + L-ornithine = L-citrulline + phosphate + H(+). Its pathway is amino-acid biosynthesis; L-arginine biosynthesis; L-arginine from L-ornithine and carbamoyl phosphate: step 1/3. In terms of biological role, reversibly catalyzes the transfer of the carbamoyl group from carbamoyl phosphate (CP) to the N(epsilon) atom of ornithine (ORN) to produce L-citrulline. This chain is Ornithine carbamoyltransferase, found in Cupriavidus metallidurans (strain ATCC 43123 / DSM 2839 / NBRC 102507 / CH34) (Ralstonia metallidurans).